Here is a 1498-residue protein sequence, read N- to C-terminus: Mitogen-activated protein kinase kinase kinase nsy-1 (1498 aa).

2 disordered regions span residues 1–35 (MSQNNKRQVQHNHEMSNDVCPLPLPPRGAPPPTAY) and 190–209 (LQSYDKNNNDDDSKPPFART). Over residues 22–33 (LPLPPRGAPPPT) the composition is skewed to pro residues. The 262-residue stretch at 664-925 (SNERVVLGKG…AKDLLQDPFI (262 aa)) folds into the Protein kinase domain. Residues 670 to 678 (LGKGTYGTV) and Lys693 contribute to the ATP site. Asp790 acts as the Proton acceptor in catalysis. A disordered region spans residues 1022–1050 (IDHARNRTFSSSSPVPDGQSSAGTNMSHP). The span at 1031–1042 (SSSSPVPDGQSS) shows a compositional bias: low complexity. The stretch at 1276 to 1314 (SREERVREDRKELRTLQEENEILIERLLQVERELNAQLK) forms a coiled coil. Residues 1461–1498 (QPVFLSPMRSRDDSLDDYHSSSADDMYTGAAAETSSGN) form a disordered region. Basic and acidic residues predominate over residues 1469 to 1479 (RSRDDSLDDYH).

Belongs to the protein kinase superfamily. STE Ser/Thr protein kinase family. MAP kinase kinase kinase subfamily. As to quaternary structure, interacts with unc-43. Interacts with sek-1. The cofactor is Mg(2+). May be phosphorylated upon pathogenic bacterial infection. May be regulated by proteasomal degradation mediated by the E3-ubiquitin ligase rle-1. In terms of tissue distribution, expressed in intestine, hypodermis, rectal gland cell and neurons including sensory AWC neurons.

The protein resides in the cell projection. The protein localises to the axon. Its subcellular location is the perikaryon. It catalyses the reaction L-seryl-[protein] + ATP = O-phospho-L-seryl-[protein] + ADP + H(+). It carries out the reaction L-threonyl-[protein] + ATP = O-phospho-L-threonyl-[protein] + ADP + H(+). Serine/threonine-protein kinase which, by phosphorylating and activating sek-1, plays an important role in the activation of the p38 pathway also composed of the downstream effectors sek-1 and pmk-1. Downstream of CaMKII unc-43 and adapter protein tir-1, plays a role in determining asymmetric cell fates in olfactory AWC neurons during neuronal development. Activation results in the repression of odorant receptor str-2 expression in one of the 2 AWC neurons. Involved in resistance to pathogenic Gram-positive and Gram-negative bacterial and fungal infection. Involved in resistance to the nematotoxic C.cinerea galectin Cgl2. Probably by activating the sek1/pmk-1/skn-1 pathway, involved in the up-regulation of gcs-1 and glutathione-S-transferase gst-4 expression upon bacterial infection. Probably downstream of tir-1 and nipi-3, required for the expression of antimicrobial peptide nlp-29 in the epidermis in response to fungal infection or physical injury. Plays a role in resistance to several environmental stresses including oxidative, protein misfolding (ER) and osmotic stresses, and DNA-damaging reagents. Plays a role in the stabilization of transcription factor rnt-1 in the intestine during oxidative stress. Involved in germline apoptosis induced by heavy metals, such as Cu(2+). In addition, plays a role in the up-regulation of gcs-1 upon arsenite treatment, most likely through activation of pmk-1, to confer protection against toxicity induced by heavy metals. Plays a role downstream of tir-1 in regulating susceptibility to anoxia. Involved in egg laying. The polypeptide is Mitogen-activated protein kinase kinase kinase nsy-1 (Caenorhabditis elegans).